The following is a 125-amino-acid chain: uncharacterized protein (125 aa).

Residues 1-21 form a disordered region; it reads MLFYHCSSFSSSSSSSSSSAS. Positions 7–21 are enriched in low complexity; sequence SSFSSSSSSSSSSAS.

This is an uncharacterized protein from Saccharomyces cerevisiae (strain ATCC 204508 / S288c) (Baker's yeast).